Consider the following 37-residue polypeptide: Large ribosomal subunit protein bL36 (37 aa).

The protein belongs to the bacterial ribosomal protein bL36 family.

The protein is Large ribosomal subunit protein bL36 of Bordetella bronchiseptica (strain ATCC BAA-588 / NCTC 13252 / RB50) (Alcaligenes bronchisepticus).